Reading from the N-terminus, the 325-residue chain is Cell division protein ZipA (325 aa).

Over 1–5 the chain is Periplasmic; that stretch reads MQELR. Residues 6–26 traverse the membrane as a helical segment; it reads LVLILVGALAIAALLFHGLWT. Residues 27 to 325 are Cytoplasmic-facing; that stretch reads SRKETSSKFG…KQRVKVFCRK (299 aa).

This sequence belongs to the ZipA family. Interacts with FtsZ via their C-terminal domains.

The protein localises to the cell inner membrane. Its function is as follows. Essential cell division protein that stabilizes the FtsZ protofilaments by cross-linking them and that serves as a cytoplasmic membrane anchor for the Z ring. Also required for the recruitment to the septal ring of downstream cell division proteins. The protein is Cell division protein ZipA of Aliivibrio fischeri (strain MJ11) (Vibrio fischeri).